Here is a 564-residue protein sequence, read N- to C-terminus: Kelch repeat and BTB domain-containing protein 1 (564 aa).

Positions 21 to 88 constitute a BTB domain; it reads CDINIVINDE…IYGIPLSLTN (68 aa). Residues 123 to 219 form the BACK domain; it reads CIDFYIYADK…SLLSPQVIKS (97 aa). 6 Kelch repeats span residues 252 to 297, 298 to 346, 347 to 395, 397 to 441, 442 to 492, and 494 to 539; these read IELI…VLDN, IIYM…ADDE, YIYC…MLNG, IYVI…VHDG, KIYI…SAHN, and LYVG…CEPI.

In terms of assembly, interacts (via BTB domain) with host CUL3.

It is found in the host cytoplasm. Its function is as follows. Probable substrate-specific adapter of CUL3-containing E3 ubiquitin-protein ligases which mediate the ubiquitination and subsequent proteasomal degradation of host target proteins. This chain is Kelch repeat and BTB domain-containing protein 1 (KBTB1), found in Cowpox virus (strain GRI-90 / Grishak) (CPV).